The primary structure comprises 441 residues: ATP-dependent protease ATPase subunit HslU (441 aa).

Residues isoleucine 18, 60–65, aspartate 254, glutamate 319, and arginine 391 contribute to the ATP site; that span reads GVGKTE.

The protein belongs to the ClpX chaperone family. HslU subfamily. As to quaternary structure, a double ring-shaped homohexamer of HslV is capped on each side by a ring-shaped HslU homohexamer. The assembly of the HslU/HslV complex is dependent on binding of ATP.

The protein localises to the cytoplasm. Functionally, ATPase subunit of a proteasome-like degradation complex; this subunit has chaperone activity. The binding of ATP and its subsequent hydrolysis by HslU are essential for unfolding of protein substrates subsequently hydrolyzed by HslV. HslU recognizes the N-terminal part of its protein substrates and unfolds these before they are guided to HslV for hydrolysis. The chain is ATP-dependent protease ATPase subunit HslU from Shewanella halifaxensis (strain HAW-EB4).